Consider the following 466-residue polypeptide: Glutamate--tRNA ligase (466 aa).

Residues 10-20 carry the 'HIGH' region motif; the sequence is PSPTGFLHIGG. A 'KMSKS' region motif is present at residues 252–256; it reads KLSKR. Lys-255 lines the ATP pocket.

Belongs to the class-I aminoacyl-tRNA synthetase family. Glutamate--tRNA ligase type 1 subfamily. Monomer.

It is found in the cytoplasm. The catalysed reaction is tRNA(Glu) + L-glutamate + ATP = L-glutamyl-tRNA(Glu) + AMP + diphosphate. Its function is as follows. Catalyzes the attachment of glutamate to tRNA(Glu) in a two-step reaction: glutamate is first activated by ATP to form Glu-AMP and then transferred to the acceptor end of tRNA(Glu). The chain is Glutamate--tRNA ligase from Mycoplasmopsis synoviae (strain 53) (Mycoplasma synoviae).